Reading from the N-terminus, the 4456-residue chain is Dynein axonemal heavy chain 2 (4456 aa).

Positions 1–12 (MASKAEKKRKVA) are enriched in basic residues. The disordered stretch occupies residues 1–55 (MASKAEKKRKVAGRGGARAGRVVRAPQSTAGPGATEASLLPDGQEPEPESGKEDS). Residues 1 to 1795 (MASKAEKKRK…RQTNTQFQYG (1795 aa)) form a stem region. Residues 1218–1274 (LDQIAQMRAMLMAMRDEENNLRSNLGIFKIEQPVSKDLQILEKELDALQQVWEITRD) are a coiled coil. The TPR 1 repeat unit spans residues 1439 to 1474 (EDNQVALSTMKASRFVKAFEKDVDHWERCLSLILEV). 4 AAA regions span residues 1794 to 2015 (YGYE…LLRY), 2075 to 2302 (DTIE…DNCN), 2407 to 2654 (RYPP…VFQG), and 2751 to 3003 (EYNL…LRRY). ATP-binding positions include 1832-1839 (GPAGTGKT), 2113-2120 (GGTGSSKT), and 2445-2452 (GPVGTGKT). Residues 2750 to 2783 (NEYNLSPSVVPMQLVLFREAIEHITRIVRVIGQP) form a TPR 2 repeat. 2791-2798 (GIGGSGRQ) provides a ligand contact to ATP. Positions 3018–3301 (YKKLLGEKRQ…EELRKKSEEM (284 aa)) are stalk. Residues 3041 to 3078 (FKIDETREKVEVMSLELEDAKKKVAEFQKQCEEYLVII) adopt a coiled-coil conformation. A TPR 3 repeat occupies 3101-3134 (IEEVKCQALADNAQKDLEEALPALEEAMRALESL). Coiled coils occupy residues 3245 to 3333 (KRIR…EEDL) and 3552 to 3596 (VRKE…GSLL). AAA regions lie at residues 3387–3617 (LTNP…EVTE) and 3833–4052 (VTSF…LLSL). TPR repeat units follow at residues 4101-4134 (TTPF…LPSM) and 4135-4169 (DPPE…QPQI).

Belongs to the dynein heavy chain family. As to quaternary structure, part of the axonemal inner dynein arm complex that consists of at least two heavy chains and a number of intermediate and light chains. Interacts with DNAI4.

It is found in the cytoplasm. The protein resides in the cytoskeleton. It localises to the cilium axoneme. The protein localises to the flagellum axoneme. Functionally, as part of the axonemal inner dynein arm complex plays a central role in ciliary beat. Expressed in sperm flagellum, it is required for sperm motility. Dyneins are microtubule-based molecular motors possessing ATPase activities that can convert the chemical energy of ATP into relative sliding between adjacent microtubule doublets to generate ciliary bending. This is Dynein axonemal heavy chain 2 from Mus musculus (Mouse).